We begin with the raw amino-acid sequence, 553 residues long: Urocanate hydratase (553 aa).

Residues 45 to 46 (GG), Gln-123, 169 to 171 (GMG), Asp-189, Arg-194, 235 to 236 (NA), 256 to 260 (QTSAH), 266 to 267 (YV), Tyr-315, and Gly-485 contribute to the NAD(+) site.

Belongs to the urocanase family. The cofactor is NAD(+).

The protein resides in the cytoplasm. It carries out the reaction 4-imidazolone-5-propanoate = trans-urocanate + H2O. It participates in amino-acid degradation; L-histidine degradation into L-glutamate; N-formimidoyl-L-glutamate from L-histidine: step 2/3. Functionally, catalyzes the conversion of urocanate to 4-imidazolone-5-propionate. The protein is Urocanate hydratase of Staphylococcus saprophyticus subsp. saprophyticus (strain ATCC 15305 / DSM 20229 / NCIMB 8711 / NCTC 7292 / S-41).